A 379-amino-acid chain; its full sequence is MSGNDYYEILEVSRNASAEEIKKSYRKMVFKYHPDKNPGDKKAEEKFKKISEAYEVLSNPEKRAAYDRYGHSTFTSGGASGFDFTSGFSTDFSDIFQDFFGGGFGKSQRASSREHLRGSDLRYDVEVSLEDAFKGIKVPISYVTNVKCSSCSGIGSEGAVNSVKCGNCNGAGSVRTRKGFLTIEEVCNVCNGEGEVIKNKCRRCGGSGRVRNEVSLLVTVPKGIETGNKVRVNGKGEAGFRGAQEGDLYVYIRVKEHKFFTRRSSDLHCSVPIKMTIAALGGEIEMPSIDGSWTKLKIPEGTQSGDQIRMRGKGMPEVNSKDRRGDMYVHVTVETPVKLTKQQVDLLKKFEEESSANCSPKYQGFFQKIKDIWRDISSG.

The J domain occupies 5 to 70 (DYYEILEVSR…EKRAAYDRYG (66 aa)). The segment at 135–213 (GIKVPISYVT…CGGSGRVRNE (79 aa)) adopts a CR-type zinc-finger fold. The Zn(2+) site is built by Cys148, Cys151, Cys165, Cys168, Cys187, Cys190, Cys201, and Cys204. CXXCXGXG motif repeat units follow at residues 148–155 (CSSCSGIG), 165–172 (CGNCNGAG), 187–194 (CNVCNGEG), and 201–208 (CRRCGGSG).

It belongs to the DnaJ family. In terms of assembly, homodimer. The cofactor is Zn(2+).

It localises to the cytoplasm. Participates actively in the response to hyperosmotic and heat shock by preventing the aggregation of stress-denatured proteins and by disaggregating proteins, also in an autonomous, DnaK-independent fashion. Unfolded proteins bind initially to DnaJ; upon interaction with the DnaJ-bound protein, DnaK hydrolyzes its bound ATP, resulting in the formation of a stable complex. GrpE releases ADP from DnaK; ATP binding to DnaK triggers the release of the substrate protein, thus completing the reaction cycle. Several rounds of ATP-dependent interactions between DnaJ, DnaK and GrpE are required for fully efficient folding. Also involved, together with DnaK and GrpE, in the DNA replication of plasmids through activation of initiation proteins. The polypeptide is Chaperone protein DnaJ (Anaplasma marginale (strain Florida)).